A 218-amino-acid chain; its full sequence is Small ribosomal subunit protein uS3c (218 aa).

Residues 47–118 (VQKNMKTSSG…KLNIAITRIE (72 aa)) form the KH type-2 domain.

It belongs to the universal ribosomal protein uS3 family. In terms of assembly, part of the 30S ribosomal subunit.

The protein resides in the plastid. The protein localises to the chloroplast. In Helianthus annuus (Common sunflower), this protein is Small ribosomal subunit protein uS3c (rps3).